The sequence spans 151 residues: MERPEPELIRQSWRAVSRSPLEHGTVLFARLFALEPDLLPLFQYNCRQFSSPEDCLSSPEFLDHIRKVMLVIDAAVTNVEDLSSLEEYLASLGRKHRAVGVKLSSFSTVGESLLYMLEKCLGPAFTPATRAAWSQLYGAVVQAMSRGWDGE.

The Globin domain maps to 1–149 (MERPEPELIR…VVQAMSRGWD (149 aa)). The cysteines at positions 46 and 55 are disulfide-linked. Residues His64 and His96 each coordinate heme b.

It belongs to the globin family. As to quaternary structure, monomer. Homodimer and homotetramer; disulfide-linked. Mainly monomeric but also detected as part of homodimers and homotetramers. Interacts with 14-3-3 proteins; regulates the phosphorylation of NGB. Could interact (ferrous form) with G-alpha(i) proteins (GTP-bound form). In terms of processing, phosphorylated during hypoxia by ERK1/ERK2. Phosphorylation regulates the heme pocket hexacoordination preventing the association of His-64 with the heme metal center. Thereby, promotes the access of dioxygen and nitrite to the heme and stimulates the nitrite reductase activity. Phosphorylation during hypoxia is stabilized by 14-3-3 proteins. An intramolecular Cys-46/Cys-55 disulfide bond, not necessarily present in orthologs, regulates the heme pocket hexacoordination preventing the association of His-64 with the heme metal center. Thereby, promotes the access of dioxygen and nitrite to the heme and stimulates the nitrite reductase activity. Predominantly expressed in brain, the strongest expression is seen in the frontal lobe, the subthalamic nucleus and the thalamus.

The protein resides in the cytoplasm. It is found in the cytosol. Its subcellular location is the mitochondrion matrix. It carries out the reaction Fe(III)-heme b-[protein] + nitric oxide + H2O = Fe(II)-heme b-[protein] + nitrite + 2 H(+). Its function is as follows. Monomeric globin with a bis-histidyl six-coordinate heme-iron atom through which it can bind dioxygen, carbon monoxide and nitric oxide. Could help transport oxygen and increase its availability to the metabolically active neuronal tissues, though its low quantity in tissues as well as its high affinity for dioxygen, which may limit its oxygen-releasing ability, argue against it. The ferrous/deoxygenated form exhibits a nitrite reductase activity and it could produce nitric oxide which in turn inhibits cellular respiration in response to hypoxia. In its ferrous/deoxygenated state, it may also exhibit GDI (Guanine nucleotide Dissociation Inhibitor) activity toward heterotrimeric G-alpha proteins, thereby regulating signal transduction to facilitate neuroprotective responses in the wake of hypoxia and associated oxidative stress. The sequence is that of Neuroglobin from Homo sapiens (Human).